The sequence spans 142 residues: Small ribosomal subunit protein bS16 (142 aa).

The interval 88–142 (GAEGTLRQPEGKTPFVAPDNGSVIIPEAITPKAEKAEEAPAEDAAPAEDDAEKAE) is disordered. Residues 126–142 (APAEDAAPAEDDAEKAE) show a composition bias toward acidic residues.

It belongs to the bacterial ribosomal protein bS16 family.

In Kocuria rhizophila (strain ATCC 9341 / DSM 348 / NBRC 103217 / DC2201), this protein is Small ribosomal subunit protein bS16.